The sequence spans 472 residues: Divalent metal cation transporter MntH (472 aa).

The next 11 membrane-spanning stretches (helical) occupy residues 59 to 79 (LLAF…PGNW), 92 to 112 (MLLS…ALAA), 136 to 156 (LALW…EVIG), 167 to 187 (VPII…LLLM), 196 to 216 (AFVI…IVLA), 233 to 253 (VVAD…TVMP), 288 to 308 (LALM…AAVF), 325 to 345 (LLAP…ALLA), 377 to 397 (VLTR…YGEQ), 402 to 422 (LLLL…IPLL), and 439 to 459 (WLMV…VKLL).

This sequence belongs to the NRAMP family.

The protein localises to the cell inner membrane. In terms of biological role, h(+)-stimulated, divalent metal cation uptake system. This is Divalent metal cation transporter MntH from Xylella fastidiosa (strain 9a5c).